A 60-amino-acid polypeptide reads, in one-letter code: Cytotoxin 2 (60 aa).

Intrachain disulfides connect Cys-3–Cys-21, Cys-14–Cys-38, Cys-42–Cys-53, and Cys-54–Cys-59.

It belongs to the three-finger toxin family. Short-chain subfamily. Type IA cytotoxin sub-subfamily. As to quaternary structure, monomer in solution; Homodimer and oligomer in the presence of negatively charged lipids forming a pore with a size ranging between 20 and 30 Angstroms. Expressed by the venom gland.

Its subcellular location is the secreted. The protein localises to the target cell membrane. Its function is as follows. Shows cytolytic activity on many different cells by forming pore in lipid membranes. In vivo, increases heart rate or kills the animal by cardiac arrest. In addition, it binds to heparin with high affinity, interacts with Kv channel-interacting protein 1 (KCNIP1) in a calcium-independent manner, and binds to integrin alpha-V/beta-3 (ITGAV/ITGB3) with moderate affinity. The protein is Cytotoxin 2 of Naja mossambica (Mozambique spitting cobra).